The chain runs to 341 residues: GDP-mannose transporter GONST5 (341 aa).

Helical transmembrane passes span 17 to 37, 44 to 64, 89 to 109, 141 to 161, 192 to 212, 233 to 253, 260 to 280, and 284 to 304; these read LSILQWWGFNVTVIIMNKWIF, FPLSVSCVHFICSSIGAYIVI, FVFCINIVLGNISLRYIPVSF, LVPIVGGILLTSITELSFNVF, INTVYYMAPFATMILGLPAFL, IILFNSGVLAFCLNFSIFYVI, TFNVAGNLKVAVAVFVSWMIF, and ISPMNAVGCGITLVGCTFYGY. The 120-residue stretch at 33 to 152 folds into the EamA domain; that stretch reads NKWIFQKLDF…PIVGGILLTS (120 aa).

Belongs to the TPT transporter family. TPT (TC 2.A.7.9) subfamily. In terms of tissue distribution, expressed in rosette leaves, flowers and siliques.

The protein resides in the golgi apparatus membrane. Its function is as follows. GDP-mannose transporter that may be involved in the import of GDP-mannose from the cytoplasm into the Golgi lumen. This chain is GDP-mannose transporter GONST5 (GONST5), found in Arabidopsis thaliana (Mouse-ear cress).